A 168-amino-acid chain; its full sequence is MAYVLVGFMGVGKTTIGNLLARKLGLKFIDIDEQIELEMNMKIKDIFEQYGETYFRTLEHNILKQHINMNIVLATGGGIIENPNNISLLKENKINIWVDTNINTVYNRIVNDVNRPNAMNKSFDAIKDLYFRRRSRYNEIAYISVNNDDELSDCVQEIHNFIIAEEGN.

10–15 (GVGKTT) serves as a coordination point for ATP. A Mg(2+)-binding site is contributed by Thr-14. Substrate-binding residues include Asp-32, Arg-56, and Gly-77. Arg-115 lines the ATP pocket. Arg-133 contacts substrate.

Belongs to the shikimate kinase family. In terms of assembly, monomer. The cofactor is Mg(2+).

The protein localises to the cytoplasm. It catalyses the reaction shikimate + ATP = 3-phosphoshikimate + ADP + H(+). Its pathway is metabolic intermediate biosynthesis; chorismate biosynthesis; chorismate from D-erythrose 4-phosphate and phosphoenolpyruvate: step 5/7. Functionally, catalyzes the specific phosphorylation of the 3-hydroxyl group of shikimic acid using ATP as a cosubstrate. This chain is Shikimate kinase, found in Macrococcus caseolyticus (strain JCSC5402) (Macrococcoides caseolyticum).